The following is a 343-amino-acid chain: Glycerol-3-phosphate dehydrogenase [NAD(P)+] (343 aa).

Positions 11, 12, 32, and 106 each coordinate NADPH. Sn-glycerol 3-phosphate-binding residues include Lys-106, Gly-137, and Ser-139. Ala-141 contacts NADPH. Residues Lys-192, Asp-245, Ser-255, Arg-256, and Asn-257 each coordinate sn-glycerol 3-phosphate. Lys-192 functions as the Proton acceptor in the catalytic mechanism. Arg-256 serves as a coordination point for NADPH. NADPH is bound by residues Val-280 and Glu-282.

It belongs to the NAD-dependent glycerol-3-phosphate dehydrogenase family.

It localises to the cytoplasm. The catalysed reaction is sn-glycerol 3-phosphate + NAD(+) = dihydroxyacetone phosphate + NADH + H(+). The enzyme catalyses sn-glycerol 3-phosphate + NADP(+) = dihydroxyacetone phosphate + NADPH + H(+). It participates in membrane lipid metabolism; glycerophospholipid metabolism. Catalyzes the reduction of the glycolytic intermediate dihydroxyacetone phosphate (DHAP) to sn-glycerol 3-phosphate (G3P), the key precursor for phospholipid synthesis. The protein is Glycerol-3-phosphate dehydrogenase [NAD(P)+] of Syntrophomonas wolfei subsp. wolfei (strain DSM 2245B / Goettingen).